The primary structure comprises 1229 residues: ABC transporter B family member 22 (1229 aa).

Transmembrane regions (helical) follow at residues 22 to 42, 69 to 89, 145 to 167, 171 to 193, 251 to 271, and 274 to 294; these read MGLGLIGAVGDGFITPIIFFI, VALLYVAGASLVICFVEGYCW, LPNFLMSASAFVASYIVGFIMLW, IVGFPFFILLLIPGLMCGRALIN, GIAIGSNGVTYAIWGFMTWYG, and MVMYHGAKGGTIFAVIICITY. One can recognise an ABC transmembrane type-1 1 domain in the interval 22-311; the sequence is MGLGLIGAVG…GLSNLKYFSE (290 aa). An ABC transporter 1 domain is found at 346 to 582; it reads VQFKHVKFMY…VDGQYTSLVR (237 aa). Residue 381–388 participates in ATP binding; the sequence is GGSGSGKS. N-linked (GlcNAc...) asparagine glycans are attached at residues asparagine 529 and asparagine 594. The next 2 membrane-spanning stretches (helical) occupy residues 661-681 and 703-723; these read ALYGCLSAVLYGALHPIYAYA and IYVLLFVGLAVLCFLISIIQQ. In terms of domain architecture, ABC transmembrane type-1 2 spans 661 to 949; that stretch reads ALYGCLSAVL…AGAMTMDLAK (289 aa). A glycan (N-linked (GlcNAc...) asparagine) is linked at asparagine 758. A run of 4 helical transmembrane segments spans residues 782–800, 807–823, 885–908, and 923–943; these read VSLLVQTISAVSVACTLGL, SIVMIAIQPVVVGCFYT, WLAGIVLATSRSLMTCTSALNYWY, and FFELFILFVSTGRVIADAGAM. Residues 984-1222 enclose the ABC transporter 2 domain; the sequence is IKFVNVDFAY…GPTGVYFSLV (239 aa). The N-linked (GlcNAc...) asparagine glycan is linked to asparagine 1004. 1019 to 1026 is an ATP binding site; it reads GPSGSGKS. Asparagine 1157 is a glycosylation site (N-linked (GlcNAc...) asparagine).

It belongs to the ABC transporter superfamily. ABCB family. Multidrug resistance exporter (TC 3.A.1.201) subfamily.

Its subcellular location is the membrane. This Arabidopsis thaliana (Mouse-ear cress) protein is ABC transporter B family member 22 (ABCB22).